Here is a 443-residue protein sequence, read N- to C-terminus: Transcription factor E2F2 (443 aa).

The tract at residues 1 to 22 is disordered; it reads MLRAPRTLAPATAQPTKSLPAL. The interval 67–107 is cyclin A/CDK2 binding; it reads ATPHGPEGQIVRCAPAGRLPAKRKLDLEGIGRPTVPEFRTP. A DNA-binding region spans residues 109-198; it reads GKCIRVDGLP…KNNIQWVGRE (90 aa). The segment at 157–178 is leucine-zipper; it reads LNWAAEVLDVQKRRIYDITNVL. A DEF box motif is present at residues 162 to 198; the sequence is EVLDVQKRRIYDITNVLEGIQLIRKKSKNNIQWVGRE. The interval 199–291 is dimerization; that stretch reads LFEDPTRPSR…PDRAEENLQI (93 aa). The segment at 306–341 is disordered; that stretch reads PEEGQEPDSPAKEALPSTSALSPIPDCAQPGCSTDS. The tract at residues 361–443 is transactivation; sequence PPPPLPPAPS…SYDLGDLLIN (83 aa). The interval 416–433 is retinoblastoma protein binding; sequence DEYLWGMDEGEGISDLFD.

It belongs to the E2F/DP family. In terms of assembly, component of the DRTF1/E2F transcription factor complex. Forms heterodimers with DP family members. The E2F2 complex binds specifically hypophosphorylated retinoblastoma protein RB1. During the cell cycle, RB1 becomes phosphorylated in mid-to-late G1 phase, detaches from the DRTF1/E2F complex, rendering E2F transcriptionally active. Viral oncoproteins, notably E1A, T-antigen and HPV E7, are capable of sequestering RB protein, thus releasing the active complex. Binds EAPP. Post-translationally, phosphorylated by CDK2 and cyclin A-CDK2 in the S-phase.

The protein resides in the nucleus. Functionally, transcription activator that binds DNA cooperatively with DP proteins through the E2 recognition site, 5'-TTTC[CG]CGC-3' found in the promoter region of a number of genes whose products are involved in cell cycle regulation or in DNA replication. The DRTF1/E2F complex functions in the control of cell-cycle progression from g1 to s phase. E2F2 binds specifically to RB1 in a cell-cycle dependent manner. This Mus musculus (Mouse) protein is Transcription factor E2F2 (E2f2).